Here is a 936-residue protein sequence, read N- to C-terminus: MKSSVSWLFFSSIPLFSSLSIVAAEVTLDSSNNSYDGSNGTTFTVFSTTDAAAGTTYSLLSDVSFQNAGALGIPLASGCFLEAGGDLTFQGNQHALKFAFINAGSSAGTVASTSAADKNLLFNDFSRLSIISCPSLLLSPTGQCALKSVGNLSLTGNSQIIFTQNFSSDNGGVINTKNFLLSGTSQFASFSRNQAFTGKQGGVVYATGTITIENSPGIVSFSQNLAKGSGGALYSTDNCSITDNFQVIFDGNSAWEAAQAQGGAICCTTTDKTVTLTGNKNLSFTNNTALTYGGAISGLKVSISAGGPTLFQSNISGSSAGQGGGGAINIASAGELALSATSGDITFNNNQVTNGSTSTRNAINIIDTAKVTSIRAATGQSIYFYDPITNPGTAASTDTLNLNLADANSEIEYGGAIVFSGEKLSPTEKAIAANVTSTIRQPAVLARGDLVLRDGVTVTFKDLTQSPGSRILMDGGTTLSAKEANLSLNGLAVNLSSLDGTNKAALKTEAADKNISLSGTIALIDTEGSFYENHNLKSASTYPLLELTTAGANGTITLGALSTLTLQEPETHYGYQGNWQLSWANATSSKIGSINWTRTGYIPSPERKSNLPLNSLWGNFIDIRSINQLIETKSSGEPFERELWLSGIANFFYRDSMPTRHGFRHISGGYALGITATTPAEDQLTFAFCQLFARDRNHITGKNHGDTYGASLYFHHTEGLFDIANFLWGKATRAPWVLSEISQIIPLSFDAKFSYLHTDNHMKTYYTDNSIIKGSWRNDAFCADLGASLPFVISVPYLLKEVEPFVKVQYIYAHQQDFYERYAEGRAFNKSELINVEIPIGVTFERDSKSEKGTYDLTLMYILDAYRRNPKCQTSLIASDANWMAYGTNLARQGFSVRAANHFQVNPHMEIFGQFAFEVRSSSRNYNTNLGSKFCF.

The N-terminal stretch at 1–23 (MKSSVSWLFFSSIPLFSSLSIVA) is a signal peptide. The 301-residue stretch at 636 to 936 (GEPFERELWL…NTNLGSKFCF (301 aa)) folds into the Autotransporter domain.

The protein belongs to the PMP outer membrane protein family.

Its subcellular location is the secreted. The protein localises to the cell wall. It localises to the cell outer membrane. The sequence is that of Probable outer membrane protein pmp7 (pmp7) from Chlamydia pneumoniae (Chlamydophila pneumoniae).